A 1108-amino-acid chain; its full sequence is Probable arabinosyltransferase A (1108 aa).

Helical transmembrane passes span 12 to 34, 204 to 223, 258 to 280, 334 to 356, 368 to 387, 397 to 414, 421 to 443, 463 to 482, 531 to 553, 582 to 604, 616 to 638, 653 to 675, and 696 to 718; these read IPRS…VPLL, IVMV…LAVL, VGLA…HVVG, VWMR…HWVL, ANRV…WLPF, IALG…AIAL, AVAV…AVAA, GLLA…LVVV, FAVL…RGHV, WAVQ…AFAC, TLYV…GWFY, IASH…LAAW, and VLAS…ASLT. Positions 804 to 825 are disordered; sequence PGLVNSDASPNKPNVAYSDSAG.

This sequence belongs to the emb family.

The protein localises to the cell membrane. Its function is as follows. Arabinosyl transferase responsible for the polymerization of arabinose into the arabinan of arabinogalactan. In Mycobacterium avium, this protein is Probable arabinosyltransferase A (embA).